A 318-amino-acid polypeptide reads, in one-letter code: MNHVSSTKPDTAPSKHLTSSHIDATDQNNKRLKKLTTKLRRKTGQAIADFNMIEEGDKVMVCLSGGKDSYTMLDMLLHMQKAAPISFSIIAVNLDQKQPGFPEHVLPNYLEGLGVDFAIIEEDTYSIVVDKVPEGKTTCSLCSRLRRGILYSNAIKMGVTKIALGHHRDDMLETLFLNMFHNGRLKSMPPKLTSDDGRNVVIRPLAYCAEQDIADYSILSGFPIIPCNLCGSQENLQRKQVKLMLAQWNTQFPGRIETMFKALQNVVPSHLADPGAFNFNDLDHSNSTSIEGDTAFDPLELTPVTKVDTLAVPITRID.

The disordered stretch occupies residues 1-29; sequence MNHVSSTKPDTAPSKHLTSSHIDATDQNN. Residues 16–27 show a composition bias toward polar residues; the sequence is HLTSSHIDATDQ. The short motif at 64–69 is the PP-loop motif element; that stretch reads SGGKDS. 3 residues coordinate [4Fe-4S] cluster: C139, C142, and C230.

It belongs to the TtcA family. Homodimer. It depends on Mg(2+) as a cofactor. The cofactor is [4Fe-4S] cluster.

The protein resides in the cytoplasm. The catalysed reaction is cytidine(32) in tRNA + S-sulfanyl-L-cysteinyl-[cysteine desulfurase] + AH2 + ATP = 2-thiocytidine(32) in tRNA + L-cysteinyl-[cysteine desulfurase] + A + AMP + diphosphate + H(+). It functions in the pathway tRNA modification. Catalyzes the ATP-dependent 2-thiolation of cytidine in position 32 of tRNA, to form 2-thiocytidine (s(2)C32). The sulfur atoms are provided by the cysteine/cysteine desulfurase (IscS) system. The polypeptide is tRNA-cytidine(32) 2-sulfurtransferase (Pseudoalteromonas atlantica (strain T6c / ATCC BAA-1087)).